The primary structure comprises 409 residues: Elongation factor Tu (409 aa).

Positions 10–214 constitute a tr-type G domain; it reads KPHVNIGTIG…AVDSYIPDPE (205 aa). Residues 19-26 are G1; the sequence is GHVDHGKT. A GTP-binding site is contributed by 19 to 26; that stretch reads GHVDHGKT. Thr-26 is a Mg(2+) binding site. The segment at 60–64 is G2; it reads GITIN. Positions 81–84 are G3; it reads DCPG. GTP contacts are provided by residues 81-85 and 136-139; these read DCPGH and NKED. Positions 136–139 are G4; the sequence is NKED. Residues 174 to 176 form a G5 region; the sequence is SGL.

In terms of assembly, monomer.

It is found in the cytoplasm. It catalyses the reaction GTP + H2O = GDP + phosphate + H(+). Its function is as follows. GTP hydrolase that promotes the GTP-dependent binding of aminoacyl-tRNA to the A-site of ribosomes during protein biosynthesis. The polypeptide is Elongation factor Tu (Nostoc sp. (strain PCC 7120 / SAG 25.82 / UTEX 2576)).